We begin with the raw amino-acid sequence, 122 residues long: Large ribosomal subunit protein uL14 (122 aa).

Belongs to the universal ribosomal protein uL14 family. In terms of assembly, part of the 50S ribosomal subunit. Forms a cluster with proteins L3 and L19. In the 70S ribosome, L14 and L19 interact and together make contacts with the 16S rRNA in bridges B5 and B8.

Functionally, binds to 23S rRNA. Forms part of two intersubunit bridges in the 70S ribosome. This chain is Large ribosomal subunit protein uL14, found in Herpetosiphon aurantiacus (strain ATCC 23779 / DSM 785 / 114-95).